The chain runs to 195 residues: Large ribosomal subunit protein uL18 (195 aa).

It belongs to the universal ribosomal protein uL18 family. Part of the 50S ribosomal subunit. Contacts the 5S and 23S rRNAs.

In terms of biological role, this is one of the proteins that bind and probably mediate the attachment of the 5S RNA into the large ribosomal subunit, where it forms part of the central protuberance. This chain is Large ribosomal subunit protein uL18, found in Nanoarchaeum equitans (strain Kin4-M).